A 535-amino-acid polypeptide reads, in one-letter code: MYHIFQISGEVIKGLGLKTKILITIVFSTLLILSVMLLSFSNNFNNKLFAATINDESETPGRDRLIGGLLTADFDEGSCLSRYHKTFLYRKPSPYKPSEYLVSKLRSYEMLHKRCGPGTKAYKEATKHLSHDENYNASKSDGECRYVVWLADYGLGNRLLTLASVFLYALLTDRIILVDNRKDIGDLLCEPFPGTSWLLPLDFPLMKYADGYHKGYSRCYGTMLENHSINSTSFPPHLYMHNLHDSRDSDKMFFCQKDQSLIDKVPWLIFRANVYFVPSLWFNPTFQTELTKLFPQKETVFHHLGRYLFHPKNQVWDIVTKYYHDHLSKADERLGIQIRVFRDQGGYYQHVMDQVISCTQREKLLPELATQEESKVNISNIPKSKAVLVTSLSPEYSKKLENMFSERANMTGEIIKVYQPSGERYQQTDKKVHDQKALAEMYLLSLTDNIVASSRSTFGYVAYSLGGLKPWLLYLPNDNKAPDPPCVRSTSMEPCFLTPPTHGCEPDAWGTESGKVVPFVRYCEDIWGLKLFDEL.

Over 1-20 the chain is Cytoplasmic; that stretch reads MYHIFQISGEVIKGLGLKTK. A helical; Signal-anchor for type II membrane protein transmembrane segment spans residues 21 to 41; sequence ILITIVFSTLLILSVMLLSFS. The Lumenal segment spans residues 42–535; the sequence is NNFNNKLFAA…IWGLKLFDEL (494 aa). Residues N136, N226, N230, N377, and N409 are each glycosylated (N-linked (GlcNAc...) asparagine).

This sequence belongs to the glycosyltransferase 37 family. In terms of tissue distribution, expressed in roots, stems, leaves, flowers, siliques and seedlings.

Its subcellular location is the golgi apparatus. It localises to the golgi stack membrane. It functions in the pathway protein modification; protein glycosylation. In terms of biological role, may be involved in cell wall biosynthesis. May act as a fucosyltransferase. The chain is Probable fucosyltransferase 4 (FUT4) from Arabidopsis thaliana (Mouse-ear cress).